The sequence spans 424 residues: STAM-binding protein (424 aa).

Residues 1 to 127 (MSDHGDVSLP…YTEYNEEKKK (127 aa)) form an interaction with CHMP3 region. Residues Ser-2 and Ser-48 each carry the phosphoserine modification. The segment at 227–231 (PAKPP) is interaction with STAM. 3 positions are modified to phosphoserine: Ser-243, Ser-245, and Ser-247. An MPN domain is found at 257-388 (VVVPGRLCPQ…LTDHGLEEIS (132 aa)). Zn(2+)-binding residues include His-335, His-337, Asp-348, His-350, Cys-390, His-396, and His-398. The JAMM motif signature appears at 335–348 (HTHPTQTAFLSSVD).

Belongs to the peptidase M67C family. As to quaternary structure, interacts with STAM. Interacts with SMAD6 and SMAD7. Interacts with CHMP3; the interaction appears to relieve the autoinhibition of CHMP3. Interacts with SMURF2 and RNF11; this interaction promotes ubiquitination. Zn(2+) serves as cofactor. In terms of processing, phosphorylated after BMP type I receptor activation. Ubiquitinated by SMURF2 in the presence of RNF11. Ubiquitously expressed.

The protein resides in the nucleus. Its subcellular location is the membrane. It is found in the cytoplasm. The protein localises to the early endosome. Its activity is regulated as follows. Inhibited by N-ethylmaleimide. Strongly and specifically inhibited by ubiquitin variants UbV(SP.2) and UbV(SP.3). Also inhibited by UbV(SP.1); an ubiquitin variant that also inhibits STAMBPL1. Its function is as follows. Zinc metalloprotease that specifically cleaves 'Lys-63'-linked polyubiquitin chains. Does not cleave 'Lys-48'-linked polyubiquitin chains. Plays a role in signal transduction for cell growth and MYC induction mediated by IL-2 and GM-CSF. Potentiates BMP (bone morphogenetic protein) signaling by antagonizing the inhibitory action of SMAD6 and SMAD7. Has a key role in regulation of cell surface receptor-mediated endocytosis and ubiquitin-dependent sorting of receptors to lysosomes. Endosomal localization of STAMBP is required for efficient EGFR degradation but not for its internalization. Involved in the negative regulation of PI3K-AKT-mTOR and RAS-MAP signaling pathways. The chain is STAM-binding protein (STAMBP) from Homo sapiens (Human).